The chain runs to 361 residues: UDP-3-O-acylglucosamine N-acyltransferase (361 aa).

Catalysis depends on His-253, which acts as the Proton acceptor.

Belongs to the transferase hexapeptide repeat family. LpxD subfamily. In terms of assembly, homotrimer.

It catalyses the reaction a UDP-3-O-[(3R)-3-hydroxyacyl]-alpha-D-glucosamine + a (3R)-hydroxyacyl-[ACP] = a UDP-2-N,3-O-bis[(3R)-3-hydroxyacyl]-alpha-D-glucosamine + holo-[ACP] + H(+). The protein operates within bacterial outer membrane biogenesis; LPS lipid A biosynthesis. Catalyzes the N-acylation of UDP-3-O-acylglucosamine using 3-hydroxyacyl-ACP as the acyl donor. Is involved in the biosynthesis of lipid A, a phosphorylated glycolipid that anchors the lipopolysaccharide to the outer membrane of the cell. The chain is UDP-3-O-acylglucosamine N-acyltransferase from Burkholderia mallei (strain ATCC 23344).